Consider the following 139-residue polypeptide: Putative pre-16S rRNA nuclease (139 aa).

It belongs to the YqgF nuclease family.

It localises to the cytoplasm. In terms of biological role, could be a nuclease involved in processing of the 5'-end of pre-16S rRNA. The chain is Putative pre-16S rRNA nuclease from Phocaeicola vulgatus (strain ATCC 8482 / DSM 1447 / JCM 5826 / CCUG 4940 / NBRC 14291 / NCTC 11154) (Bacteroides vulgatus).